The sequence spans 347 residues: DNA-directed RNA polymerase subunit alpha (347 aa).

The alpha N-terminal domain (alpha-NTD) stretch occupies residues 1–243 (MLIKQGDRLI…DQISVFINFD (243 aa)). Residues 260–347 (VNENLFKGID…EWKRKQQNEA (88 aa)) form an alpha C-terminal domain (alpha-CTD) region.

It belongs to the RNA polymerase alpha chain family. Homodimer. The RNAP catalytic core consists of 2 alpha, 1 beta, 1 beta' and 1 omega subunit. When a sigma factor is associated with the core the holoenzyme is formed, which can initiate transcription.

The catalysed reaction is RNA(n) + a ribonucleoside 5'-triphosphate = RNA(n+1) + diphosphate. DNA-dependent RNA polymerase catalyzes the transcription of DNA into RNA using the four ribonucleoside triphosphates as substrates. The protein is DNA-directed RNA polymerase subunit alpha of Nitratidesulfovibrio vulgaris (strain DSM 19637 / Miyazaki F) (Desulfovibrio vulgaris).